The primary structure comprises 121 residues: Heme-degrading monooxygenase (121 aa).

Positions 2-101 (IIVTNTIKVE…EQREDRKGIV (100 aa)) constitute an ABM domain. A Fe cation-binding site is contributed by asparagine 6. Residues 76–98 (KSDSFKKAHGRTKDTREQREDRK) are disordered. The segment covering 78 to 98 (DSFKKAHGRTKDTREQREDRK) has biased composition (basic and acidic residues). Histidine 84 contributes to the heme binding site.

Belongs to the antibiotic biosynthesis monooxygenase family. Heme-degrading monooxygenase IsdG subfamily. As to quaternary structure, homodimer.

It is found in the cytoplasm. It carries out the reaction heme b + 3 reduced [NADPH--hemoprotein reductase] + 3 O2 = biliverdin IXalpha + CO + Fe(2+) + 3 oxidized [NADPH--hemoprotein reductase] + 3 H2O + H(+). Allows bacterial pathogens to use the host heme as an iron source. Catalyzes the oxidative degradation of the heme macrocyclic porphyrin ring to the biliverdin in the presence of a suitable electron donor such as ascorbate or NADPH--cytochrome P450 reductase, with subsequent release of free iron. The polypeptide is Heme-degrading monooxygenase (Listeria innocua serovar 6a (strain ATCC BAA-680 / CLIP 11262)).